The chain runs to 318 residues: Thymidylate synthase (318 aa).

Residues arginine 25 and 180-181 (RR) contribute to the dUMP site. Catalysis depends on cysteine 200, which acts as the Nucleophile. DUMP is bound by residues 220 to 223 (RSGD), asparagine 231, and 261 to 263 (HIY). Aspartate 223 provides a ligand contact to (6R)-5,10-methylene-5,6,7,8-tetrahydrofolate. Alanine 317 is a binding site for (6R)-5,10-methylene-5,6,7,8-tetrahydrofolate.

This sequence belongs to the thymidylate synthase family. Bacterial-type ThyA subfamily. As to quaternary structure, homodimer.

The protein resides in the cytoplasm. The catalysed reaction is dUMP + (6R)-5,10-methylene-5,6,7,8-tetrahydrofolate = 7,8-dihydrofolate + dTMP. It participates in pyrimidine metabolism; dTTP biosynthesis. Functionally, catalyzes the reductive methylation of 2'-deoxyuridine-5'-monophosphate (dUMP) to 2'-deoxythymidine-5'-monophosphate (dTMP) while utilizing 5,10-methylenetetrahydrofolate (mTHF) as the methyl donor and reductant in the reaction, yielding dihydrofolate (DHF) as a by-product. This enzymatic reaction provides an intracellular de novo source of dTMP, an essential precursor for DNA biosynthesis. This is Thymidylate synthase from Bacillus cereus (strain ATCC 10987 / NRS 248).